We begin with the raw amino-acid sequence, 157 residues long: Ribosomal RNA large subunit methyltransferase H (157 aa).

S-adenosyl-L-methionine is bound by residues Leu73, Gly105, and Leu124–Phe129.

This sequence belongs to the RNA methyltransferase RlmH family. As to quaternary structure, homodimer.

It is found in the cytoplasm. The catalysed reaction is pseudouridine(1915) in 23S rRNA + S-adenosyl-L-methionine = N(3)-methylpseudouridine(1915) in 23S rRNA + S-adenosyl-L-homocysteine + H(+). Specifically methylates the pseudouridine at position 1915 (m3Psi1915) in 23S rRNA. The sequence is that of Ribosomal RNA large subunit methyltransferase H from Flavobacterium psychrophilum (strain ATCC 49511 / DSM 21280 / CIP 103535 / JIP02/86).